A 301-amino-acid chain; its full sequence is MAHVRTYNPRVRVGNWKEDVTLEEETSKEFILQKDRGELTVQKEGALKQSILKPVSLSVSQDGFLHFGDTVMLVNCGDGGHMQRSPCVLSIIADSSNVTSHSQTNTGPHLLGPLQVGGAHSMDPCVRNTFIIISVDGSSDGEVVRYDQSFALKTTGGFAGELFLASDHKSFQKCAKKSRLQELSLVEEFDFLCWWKVLYFDPQDRLENEGYPVQVNNKVLISHCKTNQCLAALSNHILWSQFGKEYELTAHTFLDSHKAEQDNNHWLFSTAHPANQSQSLLQLQQEEHKENQEDTQVKDCS.

The protein resides in the cytoplasm. The protein localises to the cytoskeleton. Its subcellular location is the cilium axoneme. Microtubule inner protein (MIP) part of the dynein-decorated doublet microtubules (DMTs) in cilia axoneme, which is required for motile cilia beating. The chain is Cilia- and flagella-associated protein 161 from Danio rerio (Zebrafish).